A 579-amino-acid chain; its full sequence is 2-succinyl-5-enolpyruvyl-6-hydroxy-3-cyclohexene-1-carboxylate synthase (579 aa).

Belongs to the TPP enzyme family. MenD subfamily. Homodimer. Mg(2+) is required as a cofactor. Requires Mn(2+) as cofactor. The cofactor is thiamine diphosphate.

It catalyses the reaction isochorismate + 2-oxoglutarate + H(+) = 5-enolpyruvoyl-6-hydroxy-2-succinyl-cyclohex-3-ene-1-carboxylate + CO2. The protein operates within quinol/quinone metabolism; 1,4-dihydroxy-2-naphthoate biosynthesis; 1,4-dihydroxy-2-naphthoate from chorismate: step 2/7. It participates in quinol/quinone metabolism; menaquinone biosynthesis. In terms of biological role, catalyzes the thiamine diphosphate-dependent decarboxylation of 2-oxoglutarate and the subsequent addition of the resulting succinic semialdehyde-thiamine pyrophosphate anion to isochorismate to yield 2-succinyl-5-enolpyruvyl-6-hydroxy-3-cyclohexene-1-carboxylate (SEPHCHC). The chain is 2-succinyl-5-enolpyruvyl-6-hydroxy-3-cyclohexene-1-carboxylate synthase from Oceanobacillus iheyensis (strain DSM 14371 / CIP 107618 / JCM 11309 / KCTC 3954 / HTE831).